Reading from the N-terminus, the 883-residue chain is Phosphoenolpyruvate carboxylase (883 aa).

Catalysis depends on residues histidine 138 and lysine 546.

Belongs to the PEPCase type 1 family. Requires Mg(2+) as cofactor.

It catalyses the reaction oxaloacetate + phosphate = phosphoenolpyruvate + hydrogencarbonate. Forms oxaloacetate, a four-carbon dicarboxylic acid source for the tricarboxylic acid cycle. The protein is Phosphoenolpyruvate carboxylase of Salmonella schwarzengrund (strain CVM19633).